The sequence spans 932 residues: Isoleucine--tRNA ligase (932 aa).

Residues 58 to 68 (PYANGNLHLGH) carry the 'HIGH' region motif. Residue E567 coordinates L-isoleucyl-5'-AMP. The 'KMSKS' region signature appears at 608 to 612 (KMSKS). K611 serves as a coordination point for ATP. C895, C898, C915, and C918 together coordinate Zn(2+).

It belongs to the class-I aminoacyl-tRNA synthetase family. IleS type 1 subfamily. Monomer. The cofactor is Zn(2+).

It localises to the cytoplasm. The enzyme catalyses tRNA(Ile) + L-isoleucine + ATP = L-isoleucyl-tRNA(Ile) + AMP + diphosphate. In terms of biological role, catalyzes the attachment of isoleucine to tRNA(Ile). As IleRS can inadvertently accommodate and process structurally similar amino acids such as valine, to avoid such errors it has two additional distinct tRNA(Ile)-dependent editing activities. One activity is designated as 'pretransfer' editing and involves the hydrolysis of activated Val-AMP. The other activity is designated 'posttransfer' editing and involves deacylation of mischarged Val-tRNA(Ile). This Azoarcus sp. (strain BH72) protein is Isoleucine--tRNA ligase.